A 391-amino-acid polypeptide reads, in one-letter code: Elongation factor Tu (391 aa).

A tr-type G domain is found at 10 to 201 (KPHVNIGTIG…AVDEYIPTPA (192 aa)). The G1 stretch occupies residues 19-26 (GHVDHGKT). GTP is bound at residue 19–26 (GHVDHGKT). Thr-26 provides a ligand contact to Mg(2+). The interval 55-59 (GITIS) is G2. The interval 76–79 (DCPG) is G3. GTP contacts are provided by residues 76–80 (DCPGH) and 131–134 (NKVD). The segment at 131–134 (NKVD) is G4. The tract at residues 169 to 171 (SAL) is G5.

It belongs to the TRAFAC class translation factor GTPase superfamily. Classic translation factor GTPase family. EF-Tu/EF-1A subfamily. Monomer.

Its subcellular location is the cytoplasm. The enzyme catalyses GTP + H2O = GDP + phosphate + H(+). In terms of biological role, GTP hydrolase that promotes the GTP-dependent binding of aminoacyl-tRNA to the A-site of ribosomes during protein biosynthesis. This Ruegeria pomeroyi (strain ATCC 700808 / DSM 15171 / DSS-3) (Silicibacter pomeroyi) protein is Elongation factor Tu.